The following is a 443-amino-acid chain: ATP-dependent protease ATPase subunit HslU (443 aa).

ATP is bound by residues Ile18, 60-65 (GVGKTE), Asp256, Glu321, and Arg393.

The protein belongs to the ClpX chaperone family. HslU subfamily. As to quaternary structure, a double ring-shaped homohexamer of HslV is capped on each side by a ring-shaped HslU homohexamer. The assembly of the HslU/HslV complex is dependent on binding of ATP.

Its subcellular location is the cytoplasm. In terms of biological role, ATPase subunit of a proteasome-like degradation complex; this subunit has chaperone activity. The binding of ATP and its subsequent hydrolysis by HslU are essential for unfolding of protein substrates subsequently hydrolyzed by HslV. HslU recognizes the N-terminal part of its protein substrates and unfolds these before they are guided to HslV for hydrolysis. This chain is ATP-dependent protease ATPase subunit HslU, found in Salmonella arizonae (strain ATCC BAA-731 / CDC346-86 / RSK2980).